Consider the following 154-residue polypeptide: Aspartate carbamoyltransferase regulatory chain (154 aa).

Positions 109, 114, 138, and 141 each coordinate Zn(2+).

This sequence belongs to the PyrI family. As to quaternary structure, contains catalytic and regulatory chains. Zn(2+) is required as a cofactor.

Functionally, involved in allosteric regulation of aspartate carbamoyltransferase. The chain is Aspartate carbamoyltransferase regulatory chain from Aeromonas hydrophila subsp. hydrophila (strain ATCC 7966 / DSM 30187 / BCRC 13018 / CCUG 14551 / JCM 1027 / KCTC 2358 / NCIMB 9240 / NCTC 8049).